The chain runs to 200 residues: Putative manganese exporter (200 aa).

Helical transmembrane passes span 13-33 (TEHVMSVLAISITTVALAEIG), 53-73 (IIAAIFLATLANHALAAWLGV), 81-101 (PDILKWVLVVSFLTMAGWILI), 110-130 (SISTRGPFVASFIAFFMAEIG), 150-170 (WVIVGTTLGMLLANVPVVLIG), and 180-200 (GLIRKVTAGLFLLMALATAFF).

Belongs to the GDT1 family.

It is found in the cell inner membrane. In terms of biological role, involved in manganese homeostasis. May function as a manganese exporter. The protein is Putative manganese exporter of Vibrio cholerae serotype O1 (strain ATCC 39541 / Classical Ogawa 395 / O395).